Reading from the N-terminus, the 212-residue chain is Pyridoxine/pyridoxamine 5'-phosphate oxidase (212 aa).

Substrate contacts are provided by residues 7–10 (RREY) and Lys-66. FMN is bound by residues 61–66 (RIVLLK), 76–77 (YT), Lys-83, and Gln-105. The substrate site is built by Tyr-123, Arg-127, and Ser-131. FMN contacts are provided by residues 140-141 (QS) and Trp-185. 191-193 (RLH) is a substrate binding site. Arg-195 contributes to the FMN binding site.

This sequence belongs to the pyridoxamine 5'-phosphate oxidase family. Homodimer. The cofactor is FMN.

It catalyses the reaction pyridoxamine 5'-phosphate + O2 + H2O = pyridoxal 5'-phosphate + H2O2 + NH4(+). The catalysed reaction is pyridoxine 5'-phosphate + O2 = pyridoxal 5'-phosphate + H2O2. Its pathway is cofactor metabolism; pyridoxal 5'-phosphate salvage; pyridoxal 5'-phosphate from pyridoxamine 5'-phosphate: step 1/1. The protein operates within cofactor metabolism; pyridoxal 5'-phosphate salvage; pyridoxal 5'-phosphate from pyridoxine 5'-phosphate: step 1/1. Catalyzes the oxidation of either pyridoxine 5'-phosphate (PNP) or pyridoxamine 5'-phosphate (PMP) into pyridoxal 5'-phosphate (PLP). This chain is Pyridoxine/pyridoxamine 5'-phosphate oxidase, found in Idiomarina loihiensis (strain ATCC BAA-735 / DSM 15497 / L2-TR).